A 383-amino-acid polypeptide reads, in one-letter code: Omega-6 fatty acid desaturase, endoplasmic reticulum isozyme 2 (383 aa).

Transmembrane regions (helical) follow at residues 61–81 (TIAF…PGPL), 85–105 (GMAI…VIAH), and 117–137 (LLDD…YFSW). Positions 105-109 (HECGH) match the Histidine box-1 motif. Positions 141 to 145 (HRRHH) match the Histidine box-2 motif. A run of 3 helical transmembrane segments spans residues 179–199 (VLTL…LNVS), 225–245 (IYIS…LAMA), and 249–269 (AWVV…LVLI). The short motif at 315-319 (HVAHH) is the Histidine box-3 element.

Belongs to the fatty acid desaturase type 1 family.

The protein resides in the endoplasmic reticulum membrane. Its pathway is lipid metabolism; polyunsaturated fatty acid biosynthesis. Functionally, ER (microsomal) omega-6 fatty acid desaturase introduces the second double bond in the biosynthesis of 18:3 fatty acids, important constituents of plant membranes. It is thought to use cytochrome b5 as an electron donor and to act on fatty acids esterified to phosphatidylcholine and, possibly, other phospholipids. The sequence is that of Omega-6 fatty acid desaturase, endoplasmic reticulum isozyme 2 (FAD2-2) from Glycine max (Soybean).